Reading from the N-terminus, the 161-residue chain is Phosphopantetheine adenylyltransferase (161 aa).

Thr10 is a substrate binding site. Residues 10 to 11 (TF) and His18 each bind ATP. Substrate is bound by residues Lys42, Met74, and Arg88. ATP contacts are provided by residues 89-91 (GVR), Glu99, and 124-130 (LSFVSSS).

It belongs to the bacterial CoaD family. Homohexamer. It depends on Mg(2+) as a cofactor.

It is found in the cytoplasm. It carries out the reaction (R)-4'-phosphopantetheine + ATP + H(+) = 3'-dephospho-CoA + diphosphate. The protein operates within cofactor biosynthesis; coenzyme A biosynthesis; CoA from (R)-pantothenate: step 4/5. Functionally, reversibly transfers an adenylyl group from ATP to 4'-phosphopantetheine, yielding dephospho-CoA (dPCoA) and pyrophosphate. This is Phosphopantetheine adenylyltransferase from Proteus mirabilis (strain HI4320).